A 227-amino-acid chain; its full sequence is ATP synthase subunit a (227 aa).

Transmembrane regions (helical) follow at residues 16 to 36 (AFVYAFHFCLVALIILIVAYI), 79 to 99 (LVATIGFIVFFSNVIGIIPGF), 105 to 125 (SLNLTLVLALVVFIYYNFEGI), 176 to 196 (LFLLAMLTLAPWFAPLPAFAL), and 202 to 222 (VLQTFIFMMLTYVYLAGAVAI).

The protein belongs to the ATPase A chain family. F-type ATPases have 2 components, CF(1) - the catalytic core - and CF(0) - the membrane proton channel. CF(1) has five subunits: alpha(3), beta(3), gamma(1), delta(1), epsilon(1). CF(0) has three main subunits: a(1), b(2) and c(9-12). The alpha and beta chains form an alternating ring which encloses part of the gamma chain. CF(1) is attached to CF(0) by a central stalk formed by the gamma and epsilon chains, while a peripheral stalk is formed by the delta and b chains.

Its subcellular location is the cell inner membrane. In terms of biological role, key component of the proton channel; it plays a direct role in the translocation of protons across the membrane. The chain is ATP synthase subunit a from Campylobacter concisus (strain 13826).